Reading from the N-terminus, the 397-residue chain is Elongation factor Tu-2 (397 aa).

The 197-residue stretch at 10 to 206 (KPHVNIGTIG…AVDEFVPEPV (197 aa)) folds into the tr-type G domain. The segment at 19-26 (GHIDHGKT) is G1. 19–26 (GHIDHGKT) is a GTP binding site. T26 provides a ligand contact to Mg(2+). A G2 region spans residues 62-66 (GITIS). Positions 83–86 (DCPG) are G3. Residues 83-87 (DCPGH) and 138-141 (NKTD) contribute to the GTP site. The interval 138–141 (NKTD) is G4. A G5 region spans residues 176-178 (SAL).

This sequence belongs to the TRAFAC class translation factor GTPase superfamily. Classic translation factor GTPase family. EF-Tu/EF-1A subfamily. Monomer.

It localises to the cytoplasm. The catalysed reaction is GTP + H2O = GDP + phosphate + H(+). GTP hydrolase that promotes the GTP-dependent binding of aminoacyl-tRNA to the A-site of ribosomes during protein biosynthesis. The protein is Elongation factor Tu-2 of Streptomyces ramocissimus.